The primary structure comprises 113 residues: Hydrogenase maturation factor HypA (113 aa).

H2 serves as a coordination point for Ni(2+). C73, C76, C89, and C92 together coordinate Zn(2+).

The protein belongs to the HypA/HybF family.

In terms of biological role, involved in the maturation of [NiFe] hydrogenases. Required for nickel insertion into the metal center of the hydrogenase. This chain is Hydrogenase maturation factor HypA, found in Paracoccus denitrificans (strain Pd 1222).